Reading from the N-terminus, the 274-residue chain is MAD2L1-binding protein (274 aa).

Residues 45–78 (ASEAFCPRDCMVPVVFPGPVSQEGCCQFTCELLK) are interaction with MAD2L1. Position 102 is a phosphoserine (serine 102).

Belongs to the MAD2L1BP family. As to quaternary structure, interacts with MAD2L1.

The protein localises to the nucleus. The protein resides in the cytoplasm. Its subcellular location is the cytoskeleton. It is found in the spindle. Functionally, may function to silence the spindle checkpoint and allow mitosis to proceed through anaphase by binding MAD2L1 after it has become dissociated from the MAD2L1-CDC20 complex. The chain is MAD2L1-binding protein (MAD2L1BP) from Homo sapiens (Human).